The chain runs to 184 residues: Tumor necrosis factor alpha-induced protein 8-like protein 2 (184 aa).

The residue at position 3 (Ser-3) is a Phosphoserine; by MAP3K7.

This sequence belongs to the TNFAIP8 family. TNFAIP8L2 subfamily. As to quaternary structure, may interact with CASP8; however, such result is unclear since PubMed:19079267 could not reproduce the interaction with CASP8. Interacts with RAC1. Post-translationally, phosphorylated by TAK1/MAP3K7; this phosphorylation triggers association with BTRC and subsequent ubiquitination and degradation. In terms of processing, ubiquitinated in a BTRC-depdent manner; leading to degradation mediated through the proteasome pathway. As to expression, expressed in T-cells, B-cells, macrophages, neurons in the brain and brainstem, and stratified squamous epithelia of the esophagus, cervix and skin.

The protein resides in the cytoplasm. It localises to the nucleus. The protein localises to the lysosome. In terms of biological role, acts as a negative regulator of innate and adaptive immunity by maintaining immune homeostasis. Plays a regulatory role in the Toll-like signaling pathway by determining the strength of LPS-induced signaling and gene expression. Inhibits TCR-mediated T-cell activation and negatively regulate T-cell function to prevent hyperresponsiveness. Also inhibits autolysosome formation via negatively modulating MTOR activation by interacting with RAC1 and promoting the disassociation of the RAC1-MTOR complex. Plays an essential role in NK-cell biology by acting as a checkpoint and displaying an expression pattern correlating with NK-cell maturation process and by negatively regulating NK-cell maturation and antitumor immunity. Mechanistically, suppresses IL-15-triggered mTOR activity in NK-cells. This Homo sapiens (Human) protein is Tumor necrosis factor alpha-induced protein 8-like protein 2 (TNFAIP8L2).